The chain runs to 541 residues: Lipase-like PAD4 (541 aa).

Ser-118 (nucleophile) is an active-site residue. Active-site charge relay system residues include Asp-178 and His-229.

Belongs to the AB hydrolase superfamily. Lipase family. Part of a nuclear complex made of EDS1, SG101 and PAD4 that can be redirected to the cytoplasm in the presence of an extranuclear form of EDS1. Sabilized by direct interaction with EDS1 in infected leaves. Part of a nuclear protein complex made of VICTR, PAD4 and EDS1. Interacts with VICTR. Interacts with EDS1.

Its subcellular location is the nucleus. The protein resides in the cytoplasm. Its function is as follows. Probable lipase required downstream of MPK4 for accumulation of the plant defense-potentiating molecule, salicylic acid, thus contributing to the plant innate immunity against invasive biotrophic pathogens and to defense mechanisms upon recognition of microbe-associated molecular patterns (MAMPs). Participates in the regulation of various molecular and physiological processes that influence fitness. Together with SG101, required for programmed cell death (PCD) triggered by NBS-LRR resistance proteins (e.g. RPS4, RPW8.1 and RPW8.2) in response to the fungal toxin fumonisin B1 (FB1) and avirulent pathogens (e.g. P.syringae pv. tomato strain DC3000 avrRps4 and pv. maculicola, turnip crinkle virus (TCV), and H.arabidopsidis isolates CALA2, EMOY2, EMWA1 and HIND4). Together with EDS1, confers a basal resistance by restricting the growth of virulent pathogens (e.g. H.arabidopsidis isolates NOCO2 and EMCO5, E.orontii isolate MGH, and P.syringae pv. tomato strain DC3000 or expressing HopW1-1 (HopPmaA)). Necessary for the salicylic acid-(SA-) dependent systemic acquired resistance (SAR) response that involves expression of multiple defense responses, including synthesis of the phytoalexin camalexin and expression of pathogenesis-related genes (e.g. PR1, ALD1, BGL2 and PR5) in response to pathogens, triggering a signal amplification loop that increases SA levels via EDS5 and SID2, but, together with EDS1, seems to repress the ethylene/jasmonic acid (ET/JA) defense pathway. May also function in response to abiotic stresses such as UV-C light and LSD1-dependent acclimatization to light conditions that promote excess excitation energy (EEE), probably by transducing redox signals and modulating stomatal conductance. Regulates the formation of lysigenous aerenchyma in hypocotyls in response to hypoxia, maybe via hydrogen peroxide production. Modulates leaf senescence in insect-infested tissue and triggers a phloem-based defense mechanism including antibiosis (e.g. green peach aphid (GPA), M.persicae) to limit phloem sap uptake and insect growth, thus providing an EDS1-independent basal resistance to insects. Also involved in regulation of root meristematic zone-targeted growth arrest together with EDS1 and in a VICTR-dependent manner. The sequence is that of Lipase-like PAD4 (PAD4) from Arabidopsis thaliana (Mouse-ear cress).